Here is a 208-residue protein sequence, read N- to C-terminus: Probable GTP-binding protein EngB (208 aa).

The EngB-type G domain occupies 18–187; sequence KQFEICVIGR…FALMKKVVIQ (170 aa). GTP-binding positions include 26–33, 52–56, 69–72, 135–138, and 166–168; these read GRSNVGKS, GRTQL, DLPG, NKLD, and VSA. Residues Ser33 and Thr54 each contribute to the Mg(2+) site.

This sequence belongs to the TRAFAC class TrmE-Era-EngA-EngB-Septin-like GTPase superfamily. EngB GTPase family. Requires Mg(2+) as cofactor.

Functionally, necessary for normal cell division and for the maintenance of normal septation. The protein is Probable GTP-binding protein EngB of Ureaplasma parvum serovar 3 (strain ATCC 27815 / 27 / NCTC 11736).